Here is a 1239-residue protein sequence, read N- to C-terminus: Structural polyprotein (1239 aa).

A necessary for nucleocapsid assembly and virus assembly region spans residues 1–35 (MFPYPTLNYPPMAPINPMAYRDPNPPRQVAPFRPP). Residues 1–101 (MFPYPTLNYP…RKPKPGKRQR (101 aa)) are disordered. Residues 23-34 (PNPPRQVAPFRP) are compositionally biased toward pro residues. The interval 36-69 (LAAQIEDLRRSIANLTLKQRAPNPPAGPPAKRKK) is host transcription inhibition. A Supraphysiological nuclear export signal motif is present at residues 43–50 (LRRSIANL). The N-linked (GlcNAc...) asparagine; by host glycan is linked to Asn49. A Nuclear localization signal motif is present at residues 66–69 (KRKK). The span at 79 to 101 (KKKRPPPPAKKQKRKPKPGKRQR) shows a compositional bias: basic residues. Residues 81–111 (KRPPPPAKKQKRKPKPGKRQRMCMKLESDKT) are binding to the viral RNA. Positions 96–110 (PGKRQRMCMKLESDK) are ribosome-binding. Ser108 is modified (phosphoserine). One can recognise a Peptidase S3 domain in the interval 110-259 (KTFPIMLNGQ…KDTPEGSEPW (150 aa)). The residue at position 111 (Thr111) is a Phosphothreonine. The active-site Charge relay system is the His136. The interval 152-157 (KKASIY) is interaction with spike glycoprotein E2. Active-site charge relay system residues include Asp158 and Ser210. Residues 244 to 248 (QKGVT) are interaction with spike glycoprotein E2. Positions 260–271 (SLATVMCVLANI) are functions as an uncleaved signal peptide for the precursor of protein E3/E2. The Extracellular segment spans residues 260 to 681 (SLATVMCVLA…HVVVVYYYNR (422 aa)). Intrachain disulfides connect Cys266-Cys275, Cys280-Cys284, Cys283-Cys315, Cys341-Cys444, Cys344-Cys349, Cys411-Cys425, Cys472-Cys585, Cys521-Cys545, and Cys523-Cys539. The N-linked (GlcNAc...) asparagine; by host glycan is linked to Asn270. A glycan (N-linked (GlcNAc...) asparagine; by host) is linked at Asn637. Residues 682–702 (YPLTTIIGLCTCVAIIMVSCD) traverse the membrane as a helical segment. The Cytoplasmic segment spans residues 703–742 (HPCGSFSGLRNLCITPYKLAPNAQVPILLALLCCIKPTRA). Cys705 carries the S-palmitoyl cysteine; by host lipid modification. The segment at 710–714 (GLRNL) is interaction with the capsid protein. The tract at residues 714 to 734 (LCITPYKLAPNAQVPILLALL) is transient transmembrane before p62-6K protein processing. S-palmitoyl cysteine; by host attachment occurs at residues Cys715, Cys735, and Cys736. Cys715 and Cys736 are oxidised to a cystine. The Extracellular portion of the chain corresponds to 743 to 754 (DDTLQVLNYLWN). Residues 755–775 (NNQNFFWMQTLIPLAALIVCM) traverse the membrane as a helical segment. Residue Arg776 is a topological domain, cytoplasmic. A helical transmembrane segment spans residues 777–797 (MLAALFCCGPAFLLVCGAWAA). The Extracellular segment spans residues 798-1215 (AYEHTAVMPN…WSWLKVLVGG (418 aa)). Intrachain disulfides connect Cys847-Cys912, Cys860-Cys892, Cys861-Cys894, and Cys866-Cys876. The E1 fusion peptide loop stretch occupies residues 882 to 899 (VYPFMWGGAYCFCDTENT). N-linked (GlcNAc...) asparagine; by host glycans are attached at residues Asn932 and Asn1069. 3 disulfides stabilise this stretch: Cys1058-Cys1070, Cys1100-Cys1175, and Cys1105-Cys1179. A helical transmembrane segment spans residues 1216 to 1236 (TSAFIVLGLIATAVVALVLFF). Residues 1237 to 1239 (HRH) are Cytoplasmic-facing.

In terms of assembly, homodimer. Homomultimer. Interacts with host karyopherin KPNA4; this interaction allows the nuclear import of the viral capsid protein. Interacts with spike glycoprotein E2. Interacts with host IRAK1; the interaction leads to inhibition of IRAK1-dependent signaling. Part of a tetrameric complex composed of host CRM1, host importin alpha/beta dimer and the viral capsid; this complex blocks the receptor-mediated transport through the nuclear pore. Interacts with host phosphatase PPP1CA; this interaction dephosphorylates the capsid protein, which increases its ability to bind to the viral genome. The precursor of protein E3/E2 and E1 form a heterodimer shortly after synthesis. As to quaternary structure, the precursor of protein E3/E2 and E1 form a heterodimer shortly after synthesis. Processing of the precursor of protein E3/E2 into E2 and E3 results in a heterodimer of the spike glycoproteins E2 and E1. Spike at virion surface are constituted of three E2-E1 heterodimers. After target cell attachment and endocytosis, E1 change conformation to form homotrimers. E2-E1 heterodimers interact with host VLDLR or LRP8/APOER2 to mediate viral entry. Interacts with 6K protein. In terms of assembly, interacts with spike glycoprotein E1. Processing of the precursor of protein E3/E2 into E2 and E3 results in a heterodimer of the spike glycoproteins E2 and E1. Spike at virion surface are constituted of a trimer of E2-E1 heterodimers. Interacts with 6K protein. E2-E1 heterodimers interact with host VLDLR or LRP8/APOER2 to mediate viral entry. Interacts (via E2-A) with host VLDLR (via class A repeats); this interaction mediates viral entry into host cell. Interacts with host LRP8/APOER2 (via class A repeats); this interaction mediates viral entry into host cell. Oligomer. Interacts with spike glycoprotein E1. Interacts with spike glycoprotein E2. Post-translationally, structural polyprotein: Specific enzymatic cleavages in vivo yield mature proteins. Capsid protein is auto-cleaved during polyprotein translation, unmasking a signal peptide at the N-terminus of the precursor of E3/E2. The remaining polyprotein is then targeted to the host endoplasmic reticulum, where host signal peptidase cleaves it into pE2, 6K and E1 proteins. pE2 is further processed to mature E3 and E2 by host furin in trans-Golgi vesicle. In terms of processing, phosphorylated on serine and threonine residues. Palmitoylated via thioester bonds. These palmitoylations may induce disruption of the C-terminus transmembrane. This would result in the reorientation of E2 C-terminus from lumenal to cytoplasmic side. Post-translationally, N-glycosylated. In terms of processing, palmitoylated via thioester bonds.

It localises to the virion. It is found in the host cytoplasm. The protein resides in the host cell membrane. The protein localises to the host nucleus. Its subcellular location is the virion membrane. It localises to the host Golgi apparatus. It is found in the host trans-Golgi network. The protein resides in the host endoplasmic reticulum. It carries out the reaction Autocatalytic release of the core protein from the N-terminus of the togavirus structural polyprotein by hydrolysis of a -Trp-|-Ser- bond.. Forms an icosahedral capsid with a T=4 symmetry composed of 240 copies of the capsid protein surrounded by a lipid membrane through which penetrate 80 spikes composed of trimers of E1-E2 heterodimers. The capsid protein binds to the viral RNA genome at a site adjacent to a ribosome binding site for viral genome translation following genome release. Possesses a protease activity that results in its autocatalytic cleavage from the nascent structural protein. Following its self-cleavage, the capsid protein transiently associates with ribosomes, and within several minutes the protein binds to viral RNA and rapidly assembles into icosahedric core particles. The resulting nucleocapsid eventually associates with the cytoplasmic domain of the spike glycoprotein E2 at the cell membrane, leading to budding and formation of mature virions. In case of infection, new virions attach to target cells and after clathrin-mediated endocytosis their membrane fuses with the host endosomal membrane. This leads to the release of the nucleocapsid into the cytoplasm, followed by an uncoating event necessary for the genomic RNA to become accessible. The uncoating might be triggered by the interaction of capsid proteins with ribosomes. Binding of ribosomes would release the genomic RNA since the same region is genomic RNA-binding and ribosome-binding. Specifically inhibits interleukin-1 receptor-associated kinase 1/IRAK1-dependent signaling during viral entry, representing a means by which the alphaviruses may evade innate immune detection and activation prior to viral gene expression. Inhibits host transcription. Forms a tetrameric complex with XPO1/CRM1 and the nuclear import receptor importin. This complex blocks the central channel of host nuclear pores thereby inhibiting the receptor-mediated nuclear transport and thus the host mRNA and rRNA transcription. The inhibition of transcription is linked to a cytopathic effect on the host cell. Its function is as follows. Provides the signal sequence for the translocation of the precursor of protein E3/E2 to the host endoplasmic reticulum. Furin-cleaved E3 remains associated with spike glycoprotein E1 and mediates pH protection of the latter during the transport via the secretory pathway. After virion release from the host cell, the assembly protein E3 is gradually released in the extracellular space. In terms of biological role, plays a role in viral attachment to target host cell, by binding to the cell receptors VLDLR or LRP8/APOER2. Synthesized as a p62 precursor which is processed by furin at the cell membrane just before virion budding, giving rise to E2-E1 heterodimer. The p62-E1 heterodimer is stable, whereas E2-E1 is unstable and dissociate at low pH. p62 is processed at the last step, presumably to avoid E1 fusion activation before its final export to cell surface. E2 C-terminus contains a transitory transmembrane that would be disrupted by palmitoylation, resulting in reorientation of the C-terminal tail from lumenal to cytoplasmic side. This step is critical since E2 C-terminus is involved in budding by interacting with capsid proteins. This release of E2 C-terminus in cytoplasm occurs lately in protein export, and precludes premature assembly of particles at the endoplasmic reticulum membrane. Functionally, acts as a viroporin that participates in virus glycoprotein processing and transport to the plasma membrane, cell permeabilization and budding of viral particles. Disrupts the calcium homeostasis of the cell, probably at the endoplasmic reticulum level. This leads to cytoplasmic calcium elevation. Because of its lipophilic properties, the 6K protein is postulated to influence the selection of lipids that interact with the transmembrane domains of the glycoproteins, which, in turn, affects the deformability of the bilayer required for the extreme curvature that occurs as budding proceeds. Present in low amount in virions, about 3% compared to viral glycoproteins. Class II viral fusion protein. Fusion activity is inactive as long as E1 is bound to E2 in mature virion. After virus attachment to target cell via host VLDLR or LRP8/APOER2 and endocytosis, acidification of the endosome induces dissociation of E1/E2 heterodimer and concomitant trimerization of the E1 subunits. This E1 trimer is fusion active, and promotes release of viral nucleocapsid in cytoplasm after endosome and viral membrane fusion. Efficient fusion requires the presence of cholesterol and sphingolipid in the target membrane. This is Structural polyprotein from Aedes (Human).